The primary structure comprises 417 residues: Serine hydroxymethyltransferase (417 aa).

(6S)-5,6,7,8-tetrahydrofolate-binding positions include Leu122 and 126–128 (GHL). Lys230 carries the post-translational modification N6-(pyridoxal phosphate)lysine. A (6S)-5,6,7,8-tetrahydrofolate-binding site is contributed by 355–357 (SPF).

Belongs to the SHMT family. In terms of assembly, homodimer. Pyridoxal 5'-phosphate is required as a cofactor.

Its subcellular location is the cytoplasm. The enzyme catalyses (6R)-5,10-methylene-5,6,7,8-tetrahydrofolate + glycine + H2O = (6S)-5,6,7,8-tetrahydrofolate + L-serine. It participates in one-carbon metabolism; tetrahydrofolate interconversion. Its pathway is amino-acid biosynthesis; glycine biosynthesis; glycine from L-serine: step 1/1. In terms of biological role, catalyzes the reversible interconversion of serine and glycine with tetrahydrofolate (THF) serving as the one-carbon carrier. This reaction serves as the major source of one-carbon groups required for the biosynthesis of purines, thymidylate, methionine, and other important biomolecules. Also exhibits THF-independent aldolase activity toward beta-hydroxyamino acids, producing glycine and aldehydes, via a retro-aldol mechanism. The chain is Serine hydroxymethyltransferase from Francisella philomiragia subsp. philomiragia (strain ATCC 25017 / CCUG 19701 / FSC 153 / O#319-036).